Consider the following 310-residue polypeptide: Protoheme IX farnesyltransferase 2 (310 aa).

9 helical membrane-spanning segments follow: residues 21 to 41, 46 to 66, 99 to 119, 125 to 145, 153 to 173, 180 to 200, 226 to 246, 256 to 276, and 284 to 304; these read IWYLLVFTAFGAAVAASGIYG, IATWALMLFSVAAGSASANVL, FGLFLAGASMVMAACIALTTT, WAAAFIAFGLFNNVLVYSYML, IVLGGLCGGMPPMIGWVAVTT, GLVMGGLVFIWTPMHIWALTL, VIAVSTVAMALFSLAPLLITL, VYLATAAASGALIIALSAWVV, and AWVLFKFSSPYLAVLFIALMV.

Belongs to the UbiA prenyltransferase family. Protoheme IX farnesyltransferase subfamily.

The protein resides in the cell membrane. The enzyme catalyses heme b + (2E,6E)-farnesyl diphosphate + H2O = Fe(II)-heme o + diphosphate. The protein operates within porphyrin-containing compound metabolism; heme O biosynthesis; heme O from protoheme: step 1/1. Converts heme B (protoheme IX) to heme O by substitution of the vinyl group on carbon 2 of heme B porphyrin ring with a hydroxyethyl farnesyl side group. This chain is Protoheme IX farnesyltransferase 2, found in Cenarchaeum symbiosum (strain A).